We begin with the raw amino-acid sequence, 617 residues long: Acyl-CoA dehydrogenase family member 11 (617 aa).

The interval 1-47 (MHRIGNAVRMASSSSANATITARHTQYSHAKTGGFSQTGPTLHNPYK) is disordered. Residues 11 to 22 (ASSSSANATITA) show a composition bias toward low complexity. Residues 23 to 41 (RHTQYSHAKTGGFSQTGPT) show a composition bias toward polar residues. FAD-binding positions include 206–215 (QWMTEKKGGS) and 241–243 (FSS). Serine 215 serves as a coordination point for substrate. Positions 267 and 334 each coordinate substrate. Residues arginine 359, 366–369 (QSKW), glutamate 437, glycine 441, and 464–466 (EGT) contribute to the FAD site.

The protein belongs to the acyl-CoA dehydrogenase family. Homotetramer; dimer of dimers.

Promotes adaption to elevated temperatures by regulating expression of the lipid desaturase, fat-7. Binds selectively and with high affinity to fatty acids with chain lengths from C10 to C12 and prevents them from activating fat-7 expression mediated by the nuclear hormone receptor nhr-49, leading to low levels of membrane lipid desaturation and membrane fluidity for adaption to heat. The polypeptide is Acyl-CoA dehydrogenase family member 11 (Caenorhabditis elegans).